Reading from the N-terminus, the 398-residue chain is MTIRNQRFSLLKQPIYSTLNQHLIDYPTPSNLSYWWGFGSLAGICLVIQIVTGVFLAMHYTPHVDLAFNSVEHIMRDVEGGWLLRYMHANGASMFFIVVYLHIFRGLYYASYSSPREFVWCLGVVIFLLMIVTAFIGYVLPWGQMSFWGATVITSLASAIPVVGDTIVTWLWGGFSVDNATLNRFFSLHYLLPFILVGASLLHLAALHQYGSNNPLGVHSEMDKIAFYPYFYVKDLVGWVAFAIFFSIWIFFAPNVLGHPDNYIPANPMSTPPHIVPEWYFLPIYAILRSIPDKAGGVAAIALVFISLLALPFFKEMYVRSSSFRPIYQGIFWLLLADCLLLGWIGCQPVEAPFVTIGQISSVFFFLFFAITPILGRVGRGIPKYYTDETHRTGSFWP.

A run of 4 helical transmembrane segments spans residues 38–58 (FGSL…FLAM), 82–104 (WLLR…LHIF), 119–139 (VWCL…IGYV), and 185–205 (FFSL…LHLA). H88 and H102 together coordinate heme b. Heme b-binding residues include H189 and H203. H208 contacts a ubiquinone. A run of 4 helical transmembrane segments spans residues 231-251 (FYVK…IWIF), 295-315 (AGGV…PFFK), 327-347 (IYQG…WIGC), and 354-373 (FVTI…AITP).

Belongs to the cytochrome b family. The main subunits of complex b-c1 are: cytochrome b, cytochrome c1 and the Rieske protein. Heme b is required as a cofactor.

It is found in the mitochondrion inner membrane. Functionally, component of the ubiquinol-cytochrome c reductase complex (complex III or cytochrome b-c1 complex) that is part of the mitochondrial respiratory chain. The b-c1 complex mediates electron transfer from ubiquinol to cytochrome c. Contributes to the generation of a proton gradient across the mitochondrial membrane that is then used for ATP synthesis. The protein is Cytochrome b (MT-CYB) of Triticum aestivum (Wheat).